The primary structure comprises 315 residues: Methionyl-tRNA formyltransferase (315 aa).

(6S)-5,6,7,8-tetrahydrofolate is bound at residue 113–116 (SLLP).

The protein belongs to the Fmt family.

It carries out the reaction L-methionyl-tRNA(fMet) + (6R)-10-formyltetrahydrofolate = N-formyl-L-methionyl-tRNA(fMet) + (6S)-5,6,7,8-tetrahydrofolate + H(+). Its function is as follows. Attaches a formyl group to the free amino group of methionyl-tRNA(fMet). The formyl group appears to play a dual role in the initiator identity of N-formylmethionyl-tRNA by promoting its recognition by IF2 and preventing the misappropriation of this tRNA by the elongation apparatus. The protein is Methionyl-tRNA formyltransferase of Shigella dysenteriae serotype 1 (strain Sd197).